Consider the following 1125-residue polypeptide: ATP-dependent DNA helicase Hel308 (1125 aa).

A Q motif motif is present at residues 1–29 (MKVDELPIDERIKRVIKERGIEELYPPQA). ATP is bound by residues Q28 and 46 to 53 (IPTASGKT). One can recognise a Helicase ATP-binding domain in the interval 33–197 (KSGVLEGKNL…WLDASLVVSD (165 aa)). The DEAH box motif lies at 145–148 (DEVH). A Helicase C-terminal domain is found at 226-440 (NWESLVLDAV…ELKERLESET (215 aa)). Positions 500 to 640 (LIGLWIAEGS…LQLLVASLGY (141 aa)) constitute a DOD-type homing endonuclease domain.

It belongs to the helicase family. Hel308 subfamily. In terms of assembly, monomer. In terms of processing, this protein undergoes a protein self splicing that involves a post-translational excision of the intervening region (intein) followed by peptide ligation.

The catalysed reaction is Couples ATP hydrolysis with the unwinding of duplex DNA by translocating in the 3'-5' direction.. It carries out the reaction ATP + H2O = ADP + phosphate + H(+). DNA-dependent ATPase and 3'-5' DNA helicase that may be involved in repair of stalled replication forks. This chain is ATP-dependent DNA helicase Hel308, found in Thermococcus kodakarensis (strain ATCC BAA-918 / JCM 12380 / KOD1) (Pyrococcus kodakaraensis (strain KOD1)).